The primary structure comprises 919 residues: Lipoxygenase 3, chloroplastic (919 aa).

The N-terminal 52 residues, 1-52 (MALAKELMGYPLITERSSLVSSASHFKKRTQSTQFSINPFDRRPRKTKSGVV), are a transit peptide targeting the chloroplast. The PLAT domain maps to 86-222 (VRAVVTVRNK…DHPDKRIFFT (137 aa)). The region spanning 225 to 919 (PYLPNETPSG…CRGVPNSVSI (695 aa)) is the Lipoxygenase domain. Positions 272–310 (PDKSSELSRPKLGGKEVPYPRRCRTGRQSTVSDKDAESR) are disordered. Fe cation-binding residues include His578, His583, His770, Asn774, and Ile919.

The protein belongs to the lipoxygenase family. It depends on Fe cation as a cofactor. Expressed in roots and leaves.

The protein localises to the plastid. It is found in the chloroplast. It carries out the reaction (9Z,12Z)-octadecadienoate + O2 = (13S)-hydroperoxy-(9Z,11E)-octadecadienoate. The enzyme catalyses (9Z,12Z,15Z)-octadecatrienoate + O2 = (13S)-hydroperoxy-(9Z,11E,15Z)-octadecatrienoate. Its pathway is lipid metabolism; oxylipin biosynthesis. 13S-lipoxygenase that can use linolenic acid as substrates. Plant lipoxygenases may be involved in a number of diverse aspects of plant physiology including growth and development, pest resistance, and senescence or responses to wounding. Catalyzes the hydroperoxidation of lipids containing a cis,cis-1,4-pentadiene structure. The protein is Lipoxygenase 3, chloroplastic (LOX3) of Arabidopsis thaliana (Mouse-ear cress).